A 744-amino-acid polypeptide reads, in one-letter code: TonB-dependent heme receptor A (744 aa).

The N-terminal stretch at 1 to 24 (MNILINKRIFLLVTLVGIQLNVTA) is a signal peptide. The region spanning 45–157 (DDSNKLPGRS…FAGTVKFETK (113 aa)) is the TBDR plug domain. A TBDR beta-barrel domain is found at 168–744 (KIGGFLKYGN…NIKFSLSQKF (577 aa)).

The protein belongs to the TonB-dependent receptor family.

It localises to the cell outer membrane. Functionally, heme receptor. The polypeptide is TonB-dependent heme receptor A (tdhA) (Haemophilus influenzae (strain ATCC 51907 / DSM 11121 / KW20 / Rd)).